Here is a 600-residue protein sequence, read N- to C-terminus: 1-deoxy-D-xylulose-5-phosphate synthase (600 aa).

Residues histidine 63 and 104 to 106 (GHS) each bind thiamine diphosphate. Aspartate 135 is a binding site for Mg(2+). Residues 136–137 (GA), asparagine 164, tyrosine 271, and glutamate 352 contribute to the thiamine diphosphate site. Asparagine 164 contacts Mg(2+).

Belongs to the transketolase family. DXPS subfamily. As to quaternary structure, homodimer. The cofactor is Mg(2+). It depends on thiamine diphosphate as a cofactor.

It carries out the reaction D-glyceraldehyde 3-phosphate + pyruvate + H(+) = 1-deoxy-D-xylulose 5-phosphate + CO2. It participates in metabolic intermediate biosynthesis; 1-deoxy-D-xylulose 5-phosphate biosynthesis; 1-deoxy-D-xylulose 5-phosphate from D-glyceraldehyde 3-phosphate and pyruvate: step 1/1. Functionally, catalyzes the acyloin condensation reaction between C atoms 2 and 3 of pyruvate and glyceraldehyde 3-phosphate to yield 1-deoxy-D-xylulose-5-phosphate (DXP). The chain is 1-deoxy-D-xylulose-5-phosphate synthase from Campylobacter fetus subsp. fetus (strain 82-40).